We begin with the raw amino-acid sequence, 360 residues long: Peptide chain release factor 1 (360 aa).

Glutamine 236 bears the N5-methylglutamine mark.

This sequence belongs to the prokaryotic/mitochondrial release factor family. In terms of processing, methylated by PrmC. Methylation increases the termination efficiency of RF1.

Its subcellular location is the cytoplasm. In terms of biological role, peptide chain release factor 1 directs the termination of translation in response to the peptide chain termination codons UAG and UAA. The chain is Peptide chain release factor 1 from Methylococcus capsulatus (strain ATCC 33009 / NCIMB 11132 / Bath).